A 242-amino-acid chain; its full sequence is Ribosomal RNA large subunit methyltransferase E (242 aa).

S-adenosyl-L-methionine is bound by residues Gly-64, Trp-66, Asp-84, Asp-100, and Asp-125. The active-site Proton acceptor is the Lys-165. Residues Ser-198–Asp-242 are disordered. Residues Gly-233 to Asp-242 are compositionally biased toward polar residues.

The protein belongs to the class I-like SAM-binding methyltransferase superfamily. RNA methyltransferase RlmE family.

The protein resides in the cytoplasm. The catalysed reaction is uridine(2552) in 23S rRNA + S-adenosyl-L-methionine = 2'-O-methyluridine(2552) in 23S rRNA + S-adenosyl-L-homocysteine + H(+). Functionally, specifically methylates the uridine in position 2552 of 23S rRNA at the 2'-O position of the ribose in the fully assembled 50S ribosomal subunit. This is Ribosomal RNA large subunit methyltransferase E from Verminephrobacter eiseniae (strain EF01-2).